We begin with the raw amino-acid sequence, 230 residues long: Protein CbbY (230 aa).

Residue aspartate 8 is the Nucleophile of the active site. Aspartate 8 and aspartate 10 together coordinate Mg(2+). Aspartate 8 is a substrate binding site. The Proton donor role is filled by aspartate 10. Substrate is bound by residues glutamate 17, 50-54, 75-78, and 115-121; these read GGKER, HRAK, and TTTSLPN. Mg(2+) is bound at residue aspartate 176.

This sequence belongs to the HAD-like hydrolase superfamily. CbbY/CbbZ/Gph/YieH family. It depends on Mg(2+) as a cofactor.

It carries out the reaction D-xylulose 1,5-bisphosphate + H2O = D-xylulose 5-phosphate + phosphate. In terms of biological role, highly selective xylulose-1,5-bisphosphate (XuBP) phosphatase. Also shows activity towards ribulose-1,5-bisphosphate (RuBP) and fructose-1,6-bisphosphate (FBP), but not towards fructose-6-phosphate (F6P) or ribulose-5-phosphate (Ru5P). Degrades xylulose-1,5-bisphosphate, a potent inhibitor of rubisco produced by the rubisco itself. The chain is Protein CbbY from Cereibacter sphaeroides (Rhodobacter sphaeroides).